Here is a 422-residue protein sequence, read N- to C-terminus: Protein FAM53B (422 aa).

Phosphoserine is present on residues serine 119, serine 168, serine 170, serine 180, serine 213, and serine 269. Disordered stretches follow at residues 193-225 (GQPCQGAPGSAPCGQAGDSWSPDPHPVGGGRLD) and 243-269 (CPPSANSTPASTPELARRSSGLARSRS). A compositionally biased stretch (low complexity) spans 244–269 (PPSANSTPASTPELARRSSGLARSRS). A Nuclear localization signal motif is present at residues 282-285 (KRRR). 2 positions are modified to phosphoserine: serine 335 and serine 344.

Belongs to the FAM53 family. Interacts with CTNNB1.

It localises to the nucleus. Acts as a regulator of Wnt signaling pathway by regulating beta-catenin (CTNNB1) nuclear localization. The polypeptide is Protein FAM53B (Mus musculus (Mouse)).